A 202-amino-acid polypeptide reads, in one-letter code: Endothelin-1 (202 aa).

An N-terminal signal peptide occupies residues 1–23; that stretch reads MDYFSMMVSLLLVAFHGAPETAA. The segment at 24–49 is disordered; it reads SGTELSTGAENPGEKPPASAPWRPRR. Positions 24-50 are excised as a propeptide; sequence SGTELSTGAENPGEKPPASAPWRPRRS. Cystine bridges form between C53–C67 and C55–C63. A propeptide spanning residues 74 to 202 is cleaved from the precursor; that stretch reads VNTPGHIVPY…EQKVTHNRTH (129 aa). The endothelin-like stretch occupies residues 110–124; the sequence is CQCTSPHDKKCWNFC.

It belongs to the endothelin/sarafotoxin family.

Its subcellular location is the secreted. In terms of biological role, endothelins are endothelium-derived vasoconstrictor peptides. Probable ligand for G-protein coupled receptors EDNRA and EDNRB which activates PTK2B, BCAR1, BCAR3 and, GTPases RAP1 and RHOA cascade in glomerular mesangial cells. Also binds the DEAR/FBXW7-AS1 receptor. Promotes mesenteric arterial wall remodeling via activation of ROCK signaling and subsequent colocalization of NFATC3 with F-actin filaments. NFATC3 then translocates to the nucleus where it subsequently promotes the transcription of the smooth muscle hypertrophy and differentiation marker ACTA2. This chain is Endothelin-1 (EDN1), found in Oryctolagus cuniculus (Rabbit).